A 305-amino-acid polypeptide reads, in one-letter code: UDP-3-O-acyl-N-acetylglucosamine deacetylase (305 aa).

Residues His79, His238, and Asp242 each coordinate Zn(2+). His265 serves as the catalytic Proton donor.

This sequence belongs to the LpxC family. Requires Zn(2+) as cofactor.

It carries out the reaction a UDP-3-O-[(3R)-3-hydroxyacyl]-N-acetyl-alpha-D-glucosamine + H2O = a UDP-3-O-[(3R)-3-hydroxyacyl]-alpha-D-glucosamine + acetate. It participates in glycolipid biosynthesis; lipid IV(A) biosynthesis; lipid IV(A) from (3R)-3-hydroxytetradecanoyl-[acyl-carrier-protein] and UDP-N-acetyl-alpha-D-glucosamine: step 2/6. Functionally, catalyzes the hydrolysis of UDP-3-O-myristoyl-N-acetylglucosamine to form UDP-3-O-myristoylglucosamine and acetate, the committed step in lipid A biosynthesis. In Edwardsiella ictaluri (strain 93-146), this protein is UDP-3-O-acyl-N-acetylglucosamine deacetylase.